Reading from the N-terminus, the 233-residue chain is Zein-alpha PMS2 (233 aa).

An N-terminal signal peptide occupies residues 1–21; the sequence is MAAKIFCFLMLLGLSASVATA.

The protein belongs to the zein family.

Its function is as follows. Zeins are major seed storage proteins. The protein is Zein-alpha PMS2 (ZMPMS2) of Zea mays (Maize).